A 145-amino-acid polypeptide reads, in one-letter code: 3-hydroxyacyl-[acyl-carrier-protein] dehydratase FabZ (145 aa).

Histidine 48 is an active-site residue.

It belongs to the thioester dehydratase family. FabZ subfamily.

It localises to the cytoplasm. It carries out the reaction a (3R)-hydroxyacyl-[ACP] = a (2E)-enoyl-[ACP] + H2O. Functionally, involved in unsaturated fatty acids biosynthesis. Catalyzes the dehydration of short chain beta-hydroxyacyl-ACPs and long chain saturated and unsaturated beta-hydroxyacyl-ACPs. The polypeptide is 3-hydroxyacyl-[acyl-carrier-protein] dehydratase FabZ (Geobacillus thermodenitrificans (strain NG80-2)).